The chain runs to 150 residues: Large ribosomal subunit protein bL9 (150 aa).

It belongs to the bacterial ribosomal protein bL9 family.

Its function is as follows. Binds to the 23S rRNA. This Buchnera aphidicola subsp. Acyrthosiphon pisum (strain 5A) protein is Large ribosomal subunit protein bL9.